The primary structure comprises 707 residues: Ribosome biogenesis protein ENP2 (707 aa).

5 WD repeats span residues 54–94 (EFSE…LKFD), 178–217 (LDTEGVNHVSINEVNGLLAAGTETNVVEFWDPRSRSRVSK), 226–265 (NRPFQVTTTSFRNDGLTFACGTSNGYSYIYDLRTSEPSII), 269–310 (GYGF…AYAS), and 312–351 (EPSVDINDIEHVPGTGMFFTANESIPMHTYYIPSLGPSPR). Positions 523–707 (LTAAEESDEE…RASKNAFRGM (185 aa)) are disordered. Position 529 is a phosphoserine (Ser-529). Positions 532–544 (ERIAMKDGRGHYD) are enriched in basic and acidic residues. Over residues 545-558 (YEDEESDEEESDDE) the composition is skewed to acidic residues. A phosphoserine mark is found at Ser-550 and Ser-555. 4 stretches are compositionally biased toward basic and acidic residues: residues 559–598 (TNQKSNKEELSEKDLRKMEKQKALIERRKKEKEQSERFMN), 629–647 (ENGKKSNESILRRNQRGEA), 659–671 (KDGNYKSRRHDNS), and 680–697 (NGNKKDNGRSKPRFENRR).

This sequence belongs to the WD repeat NOL10/ENP2 family. Component of the 90S pre-ribosomes.

It localises to the nucleus. The protein localises to the nucleolus. Its function is as follows. May be involved in rRNA-processing and ribosome biosynthesis. The sequence is that of Ribosome biogenesis protein ENP2 (ENP2) from Saccharomyces cerevisiae (strain ATCC 204508 / S288c) (Baker's yeast).